A 104-amino-acid polypeptide reads, in one-letter code: Circadian clock oscillator protein KaiB (104 aa).

It belongs to the KaiB family. As to quaternary structure, the KaiABC complex composition changes during the circadian cycle to control KaiC phosphorylation. Complexes KaiC(6), KaiA(2-4):KaiC(6), KaiB(6):KaiC(6) and KaiC(6):KaiB(6):KaiA(12) are among the most important forms, many form cooperatively. Undergoes a major conformational rearrangment; in the free state forms homotetramers as a dimer of dimers. When bound to the CI domain of KaiC switches to a monomeric thioredoxin-fold (KaiB(fs)). KaiB(fs) binds CikA, leading it to dephosphorylate phospho-RpaA.

Functionally, key component of the KaiABC oscillator complex, which constitutes the main circadian regulator in cyanobacteria. Complex composition changes during the circadian cycle to control KaiC phosphorylation. KaiA stimulates KaiC autophosphorylation, while KaiB sequesters KaiA, leading to KaiC autodephosphorylation. Phospho-Ser-431 KaiC accumulation triggers binding of KaiB to form the KaiB(6):KaiC(6) complex, leading to changes in output regulators CikA and SasA. KaiB switches to a thioredoxin-like fold (KaiB(fs)) when bound to KaiC. KaiB(6):KaiC(6) formation exposes a site for KaiA binding that sequesters KaiA from KaiC, making the KaiC(6):KaiB(6):KaiA(12) complex that results in KaiC autodephosphorylation. Its function is as follows. A metamorphic protein which reversibly switches between an inactive tetrameric fold and a rare, thioredoxin-like monomeric fold (KaiB(fs)). KaiB(fs) binds phospho-KaiC, KaiA and CikA. KaiA and CikA compete for binding to KaiB(fs), and KaiB(fs) and SasA compete for binding to KaiC, thus the clock oscillator and output signal pathway are tightly coupled. The sequence is that of Circadian clock oscillator protein KaiB from Nostoc punctiforme (strain ATCC 29133 / PCC 73102).